We begin with the raw amino-acid sequence, 468 residues long: Mitochondrial distribution and morphology protein 10 (468 aa).

Residues 370–386 are compositionally biased toward basic and acidic residues; sequence ERDGLPGIQRDDHDMHH. The tract at residues 370–394 is disordered; the sequence is ERDGLPGIQRDDHDMHHHPQRPHAS.

The protein belongs to the MDM10 family. In terms of assembly, component of the ER-mitochondria encounter structure (ERMES) or MDM complex, composed of MMM1, MDM10, MDM12 and MDM34. Associates with the mitochondrial outer membrane sorting assembly machinery SAM(core) complex.

It is found in the mitochondrion outer membrane. Functionally, component of the ERMES/MDM complex, which serves as a molecular tether to connect the endoplasmic reticulum and mitochondria. Components of this complex are involved in the control of mitochondrial shape and protein biogenesis and may function in phospholipid exchange. MDM10 is involved in the late assembly steps of the general translocase of the mitochondrial outer membrane (TOM complex). Functions in the TOM40-specific route of the assembly of outer membrane beta-barrel proteins, including the association of TOM40 with the receptor TOM22 and small TOM proteins. Can associate with the SAM(core) complex as well as the MDM12-MMM1 complex, both involved in late steps of the major beta-barrel assembly pathway, that is responsible for biogenesis of all outer membrane beta-barrel proteins. May act as a switch that shuttles between both complexes and channels precursor proteins into the TOM40-specific pathway. Plays a role in mitochondrial morphology and in the inheritance of mitochondria. The chain is Mitochondrial distribution and morphology protein 10 from Ajellomyces dermatitidis (strain ER-3 / ATCC MYA-2586) (Blastomyces dermatitidis).